We begin with the raw amino-acid sequence, 759 residues long: 1,4-alpha-glucan branching enzyme GlgB (759 aa).

The tract at residues Met-1 to His-22 is disordered. The Nucleophile role is filled by Asp-422. Glu-475 (proton donor) is an active-site residue.

Belongs to the glycosyl hydrolase 13 family. GlgB subfamily. Monomer.

It carries out the reaction Transfers a segment of a (1-&gt;4)-alpha-D-glucan chain to a primary hydroxy group in a similar glucan chain.. The protein operates within glycan biosynthesis; glycogen biosynthesis. Functionally, catalyzes the formation of the alpha-1,6-glucosidic linkages in glycogen by scission of a 1,4-alpha-linked oligosaccharide from growing alpha-1,4-glucan chains and the subsequent attachment of the oligosaccharide to the alpha-1,6 position. The sequence is that of 1,4-alpha-glucan branching enzyme GlgB from Mycobacterium sp. (strain KMS).